We begin with the raw amino-acid sequence, 256 residues long: Pro-opiomelanocortin (256 aa).

An N-terminal signal peptide occupies residues 1-26 (MPRSCYSRSGTLLLALLLQISMEVRG). The cysteines at positions 28 and 50 are disulfide-linked. A glycan (O-linked (GalNAc...) threonine) is linked at Thr-71. Phe-87 is modified (phenylalanine amide). The tract at residues 88-120 (GRGNSSGASQKREEEAAAADPGFHGDGVEPGLR) is disordered. Asn-91 carries an N-linked (GlcNAc...) asparagine glycan. Residues 100-122 (EEEAAAADPGFHGDGVEPGLRED) constitute a propeptide that is removed on maturation. Ser-125 carries the N-acetylserine; in Corticotropin modification. Val-137 carries the post-translational modification Valine amide. Phosphoserine is present on Ser-155.

This sequence belongs to the POMC family. In terms of processing, specific enzymatic cleavages at paired basic residues yield the different active peptides. As to expression, ACTH and MSH are produced by the pituitary gland.

The protein resides in the secreted. Functionally, ACTH stimulates the adrenal glands to release cortisol. Its function is as follows. MSH (melanocyte-stimulating hormone) increases the pigmentation of skin by increasing melanin production in melanocytes. In terms of biological role, beta-endorphin and Met-enkephalin are endogenous opiates. Stimulates the adrenal glands to release cortisol. Functionally, anorexigenic peptide. Increases the pigmentation of skin by increasing melanin production in melanocytes. Its function is as follows. Increases the pigmentation of skin by increasing melanin production in melanocytes. In terms of biological role, endogenous orexigenic opiate. Endogenous opiate. The chain is Pro-opiomelanocortin (POMC) from Cavia porcellus (Guinea pig).